Here is a 202-residue protein sequence, read N- to C-terminus: MYKRLVQEFFPKLDFENLEKYVNLIEFSNKNFNLTAFSGDILWKEGIFESIFTMNFIVGLVNNKENKKLKILDIGAGSGFPSIPFLITNPEIELTISESMQKRCQFLKDISEKLDLKFNLICKPVQEINPQKFDIITARAVANLEKLEKITKKIHFPKTLLAFIKGPKVFNEVQNCKNCNYKIIKVNNNINKKIFIAFKQVS.

Residues Gly-75, Phe-80, 125 to 126, and Arg-139 each bind S-adenosyl-L-methionine; that span reads VQ.

This sequence belongs to the methyltransferase superfamily. RNA methyltransferase RsmG family.

Its subcellular location is the cytoplasm. Functionally, specifically methylates the N7 position of a guanine in 16S rRNA. The protein is Ribosomal RNA small subunit methyltransferase G of Mesomycoplasma hyopneumoniae (strain 232) (Mycoplasma hyopneumoniae).